A 982-amino-acid polypeptide reads, in one-letter code: Chromosome partition protein Smc (982 aa).

33 to 40 (PNGSGKSN) contacts ATP. Coiled-coil stretches lie at residues 171–235 (RYTK…LVAD) and 263–377 (QLQL…NLNQ). The region spanning 416–535 (TGLLNTLNTF…ASDLQAALKL (120 aa)) is the SMC hinge domain. Coiled-coil stretches lie at residues 568 to 627 (LSLY…ERVN), 669 to 713 (AERD…RSQL), and 753 to 818 (IKLS…EIDE).

This sequence belongs to the SMC family. In terms of assembly, homodimer.

It is found in the cytoplasm. In terms of biological role, required for chromosome condensation and partitioning. The sequence is that of Chromosome partition protein Smc from Mycoplasma pneumoniae (strain ATCC 29342 / M129 / Subtype 1) (Mycoplasmoides pneumoniae).